A 466-amino-acid polypeptide reads, in one-letter code: Soluble pyridine nucleotide transhydrogenase (466 aa).

36-45 (ERYHNVGGGC) is a binding site for FAD.

This sequence belongs to the class-I pyridine nucleotide-disulfide oxidoreductase family. The cofactor is FAD.

The protein localises to the cytoplasm. It catalyses the reaction NAD(+) + NADPH = NADH + NADP(+). Functionally, conversion of NADPH, generated by peripheral catabolic pathways, to NADH, which can enter the respiratory chain for energy generation. The sequence is that of Soluble pyridine nucleotide transhydrogenase from Salmonella paratyphi C (strain RKS4594).